Consider the following 367-residue polypeptide: Heme A synthase (367 aa).

A run of 5 helical transmembrane segments spans residues 25 to 45 (ALRF…LVGG), 111 to 131 (LIAR…WLTG), 139 to 159 (WPLV…WWMV), 174 to 194 (LATH…IMRG), and 210 to 230 (GFAA…ALVA). His-274 lines the heme pocket. 3 helical membrane passes run 276 to 296 (IGAY…LRAA), 305 to 325 (AILL…TLLM), and 327 to 347 (VPLH…GFAV). Position 335 (His-335) interacts with heme.

The protein belongs to the COX15/CtaA family. Type 2 subfamily. Interacts with CtaB. It depends on heme b as a cofactor.

Its subcellular location is the cell membrane. It catalyses the reaction Fe(II)-heme o + 2 A + H2O = Fe(II)-heme a + 2 AH2. The protein operates within porphyrin-containing compound metabolism; heme A biosynthesis; heme A from heme O: step 1/1. Functionally, catalyzes the conversion of heme O to heme A by two successive hydroxylations of the methyl group at C8. The first hydroxylation forms heme I, the second hydroxylation results in an unstable dihydroxymethyl group, which spontaneously dehydrates, resulting in the formyl group of heme A. In Rhizobium johnstonii (strain DSM 114642 / LMG 32736 / 3841) (Rhizobium leguminosarum bv. viciae), this protein is Heme A synthase.